Here is a 460-residue protein sequence, read N- to C-terminus: Serine--tRNA ligase (460 aa).

Residue 255–257 participates in L-serine binding; sequence TAE. ATP is bound by residues 286-288 and valine 302; that span reads RKE. L-serine is bound at residue glutamate 309. 373–376 is an ATP binding site; sequence EMVS. Threonine 409 is an L-serine binding site.

The protein belongs to the class-II aminoacyl-tRNA synthetase family. Type-1 seryl-tRNA synthetase subfamily. Homodimer. The tRNA molecule binds across the dimer.

It localises to the cytoplasm. It catalyses the reaction tRNA(Ser) + L-serine + ATP = L-seryl-tRNA(Ser) + AMP + diphosphate + H(+). The catalysed reaction is tRNA(Sec) + L-serine + ATP = L-seryl-tRNA(Sec) + AMP + diphosphate + H(+). The protein operates within aminoacyl-tRNA biosynthesis; selenocysteinyl-tRNA(Sec) biosynthesis; L-seryl-tRNA(Sec) from L-serine and tRNA(Sec): step 1/1. Functionally, catalyzes the attachment of serine to tRNA(Ser). Is also able to aminoacylate tRNA(Sec) with serine, to form the misacylated tRNA L-seryl-tRNA(Sec), which will be further converted into selenocysteinyl-tRNA(Sec). The sequence is that of Serine--tRNA ligase from Aeropyrum pernix (strain ATCC 700893 / DSM 11879 / JCM 9820 / NBRC 100138 / K1).